Consider the following 349-residue polypeptide: Merozoite surface protein P38 (349 aa).

An N-terminal signal peptide occupies residues 1–21 (MKRWSIITGIVIIFCILTCKG). 6-Cys domains are found at residues 22–149 (QVEN…ISNG) and 153–301 (KIPG…YLTN). Disulfide bonds link Cys77–Cys127, Cys157–Cys183, Cys197–Cys278, and Cys208–Cys276. N-linked (GlcNAc...) asparagine glycosylation is found at Asn294, Asn295, and Asn301. Asn315 carries the GPI-anchor amidated asparagine lipid modification. Positions 316-349 (SEIFERIEREEISFAFSSYLSITLILLYLFFLNF) are cleaved as a propeptide — removed in mature form.

It localises to the cell surface. The protein resides in the cell membrane. This Plasmodium falciparum (isolate 3D7) protein is Merozoite surface protein P38 (PFS38).